The following is an 88-amino-acid chain: Small ribosomal subunit protein bS16 (88 aa).

This sequence belongs to the bacterial ribosomal protein bS16 family.

In Desulfitobacterium hafniense (strain DSM 10664 / DCB-2), this protein is Small ribosomal subunit protein bS16.